Reading from the N-terminus, the 126-residue chain is Aspartate 1-decarboxylase (126 aa).

Serine 25 functions as the Schiff-base intermediate with substrate; via pyruvic acid in the catalytic mechanism. Serine 25 bears the Pyruvic acid (Ser) mark. Residue threonine 57 participates in substrate binding. The active-site Proton donor is tyrosine 58. 73-75 is a binding site for substrate; the sequence is GAA.

The protein belongs to the PanD family. Heterooctamer of four alpha and four beta subunits. Requires pyruvate as cofactor. Post-translationally, is synthesized initially as an inactive proenzyme, which is activated by self-cleavage at a specific serine bond to produce a beta-subunit with a hydroxyl group at its C-terminus and an alpha-subunit with a pyruvoyl group at its N-terminus.

It localises to the cytoplasm. It carries out the reaction L-aspartate + H(+) = beta-alanine + CO2. The protein operates within cofactor biosynthesis; (R)-pantothenate biosynthesis; beta-alanine from L-aspartate: step 1/1. In terms of biological role, catalyzes the pyruvoyl-dependent decarboxylation of aspartate to produce beta-alanine. This chain is Aspartate 1-decarboxylase, found in Alcanivorax borkumensis (strain ATCC 700651 / DSM 11573 / NCIMB 13689 / SK2).